The chain runs to 136 residues: Large ribosomal subunit protein uL22 (136 aa).

This sequence belongs to the universal ribosomal protein uL22 family. In terms of assembly, part of the 50S ribosomal subunit.

Its function is as follows. This protein binds specifically to 23S rRNA; its binding is stimulated by other ribosomal proteins, e.g. L4, L17, and L20. It is important during the early stages of 50S assembly. It makes multiple contacts with different domains of the 23S rRNA in the assembled 50S subunit and ribosome. In terms of biological role, the globular domain of the protein is located near the polypeptide exit tunnel on the outside of the subunit, while an extended beta-hairpin is found that lines the wall of the exit tunnel in the center of the 70S ribosome. The protein is Large ribosomal subunit protein uL22 of Bacteroides fragilis (strain YCH46).